The primary structure comprises 694 residues: MLRSRQATNALRAVGQTRPLRSQTAVAFTQSLNKVPSNRRSEATVATASSTASGAFNSQVRPTPSPTFNQYDSKVQPLTGMSRNVTDESFIGKTGGEIFHDMMLRQGVKHIFGYPGGAILPVFDAIYNSTHFDFILPRHEQGAGHMAEGYARASGKPGVVLVTSGPGATNIVTPMQDALLDGTPMVVFCGQVPTTSIGSDAFQEADIVGISRPCTKWNVMVKNIAELPRRINEAFQIATTGRPGPVLVDLPKDVTAGILRRAIPTDAAIPSLPSASIQDAMDLNHKQLEASIARVAKLVNMAKQPVIYAGQGVIQSESGPELLKKLSDLASIPVTTTLQGLGGFDELDYKSLHMLGMHGSAYANMAMQEADLIIALGGRFDDRVTLNVSKFAPGARAAAAENRGGIVQFEIMPKNINKVVEATEAIVGDVGANLRLLLPHVESRSTDDRSAWYTKIDAWKKKWPLSDYQKTERHGLIKPQTLIEELSNLCADRKEKTYITTGVGQHQMWTAQHFRWRHPRTMITSGGLGTMGYGLPAAIGAKVAQPDALVVDIDGDASFNMTLTELSTAAQFNIGVKVIVLNNEEQGMVTQWQNLFYEDRYAHTHQANPDFIKIADAMGIQGQRVADPTKIKESLQWLIDTDGPALLEVITDKKVPVLPMVPGGCGLHEFIVFNPEDEKTRRGLMRERTCGLHG.

The N-terminal 42 residues, 1–42, are a transit peptide targeting the mitochondrion; that stretch reads MLRSRQATNALRAVGQTRPLRSQTAVAFTQSLNKVPSNRRSE. The segment covering 45–58 has biased composition (low complexity); sequence VATASSTASGAFNS. The interval 45–69 is disordered; that stretch reads VATASSTASGAFNSQVRPTPSPTFN. Positions 59-69 are enriched in polar residues; that stretch reads QVRPTPSPTFN. Thiamine diphosphate is bound at residue glutamate 140. FAD-binding positions include arginine 242, 358 to 379, and 410 to 429; these read HGSAYANMAMQEADLIIALGGR and EIMPKNINKVVEATEAIVGD. A thiamine pyrophosphate binding region spans residues 505–585; that stretch reads QHQMWTAQHF…VKVIVLNNEE (81 aa). Mg(2+)-binding residues include aspartate 556, asparagine 583, and glutamate 585.

Belongs to the TPP enzyme family. Homodimer. The cofactor is Mg(2+). Thiamine diphosphate is required as a cofactor.

The protein resides in the mitochondrion. The enzyme catalyses 2 pyruvate + H(+) = (2S)-2-acetolactate + CO2. It catalyses the reaction 2-oxobutanoate + pyruvate + H(+) = (S)-2-ethyl-2-hydroxy-3-oxobutanoate + CO2. It functions in the pathway amino-acid biosynthesis; L-isoleucine biosynthesis; L-isoleucine from 2-oxobutanoate: step 1/4. The protein operates within amino-acid biosynthesis; L-valine biosynthesis; L-valine from pyruvate: step 1/4. Functionally, acetolactate synthase catalytic subunit, mitochondrial; part of the gene cluster that mediates the biosynthesis of chlorflavonin, a fungal flavonoid with acetolactate synthase inhibitory activity. Is not direcly involved in chlorflavonin biosynthesis but acts as a self-resistant protein that effectively confers chlorflavonin resistance to the native host. As a catalytic subunit of mitochondrial acetolactate synthase, catalyzes the first of a series of common steps in the biosynthesis of the branched-chain amino acids. Catalyzes the irreversible decarboxylation of pyruvate to a bound hydroxyethyl group that then condenses with either a second pyruvate molecule to form 2-acetolactate (AL) or with 2-ketobutyrate to form 2-aceto-2-hydroxybutyrate (AHB). The first product is the precursor for valine and leucine biosynthesis, while the second leads to isoleucine. This Aspergillus candidus protein is Acetolactate synthase catalytic subunit, mitochondrial.